The primary structure comprises 299 residues: Phosphatidylcholine-sterol acyltransferase (299 aa).

Asn30 carries N-linked (GlcNAc...) asparagine glycosylation. The active-site Nucleophile is Ser127. An N-linked (GlcNAc...) asparagine glycan is attached at Asn185. Cys226 and Cys269 are oxidised to a cystine. Active-site charge relay system residues include Asp258 and His290.

This sequence belongs to the AB hydrolase superfamily. Lipase family.

The protein localises to the secreted. The enzyme catalyses a sterol + a 1,2-diacyl-sn-glycero-3-phosphocholine = a sterol ester + a 1-acyl-sn-glycero-3-phosphocholine. APOA1 is the most potent activator in plasma. Also activated by APOE, APOC1 and APOA4. Central enzyme in the extracellular metabolism of plasma lipoproteins. Synthesized mainly in the liver and secreted into plasma where it converts cholesterol and phosphatidylcholines (lecithins) to cholesteryl esters and lysophosphatidylcholines on the surface of high and low density lipoproteins (HDLs and LDLs). The cholesterol ester is then transported back to the liver. Has a preference for plasma 16:0-18:2 or 18:O-18:2 phosphatidylcholines. Also produced in the brain by primary astrocytes, and esterifies free cholesterol on nascent APOE-containing lipoproteins secreted from glia and influences cerebral spinal fluid (CSF) APOE- and APOA1 levels. Together with APOE and the cholesterol transporter ABCA1, plays a key role in the maturation of glial-derived, nascent lipoproteins. Required for remodeling high-density lipoprotein particles into their spherical forms. In Eliomys quercinus (Garden dormouse), this protein is Phosphatidylcholine-sterol acyltransferase (LCAT).